The sequence spans 979 residues: Glutamate receptor ionotropic, kainate 5 (979 aa).

Positions 1–14 are cleaved as a signal peptide; the sequence is MPAELLLLLIVAFA. Residues 15–544 are Extracellular-facing; it reads NPSCQVLSSL…YFSFLDPFSP (530 aa). Disulfide bonds link C36–C292, C83–C334, and C165–C170. N-linked (GlcNAc...) asparagine glycosylation is found at N219, N271, N285, N322, N372, N394, N400, N407, N414, and N478. The chain crosses the membrane as a helical span at residues 545–565; that stretch reads AVWLFMLLAYLAVSCVLFLAA. The Cytoplasmic segment spans residues 566-622; the sequence is RLSPYEWYNPHPCLRARPHILENQYTLGNSLWFPVGGFMQQGSEIMPRALSTRCVSG. A helical membrane pass occupies residues 623-643; that stretch reads VWWAFTLIIISSYTANLAAFL. Over 644–803 the chain is Extracellular; the sequence is TVQRMEVPVE…HRAKGLGMEN (160 aa). Residue N735 is glycosylated (N-linked (GlcNAc...) asparagine). The chain crosses the membrane as a helical span at residues 804-824; sequence IGGIFVVLICGLIIAVFVAVM. At 825–979 the chain is on the cytoplasmic side; sequence EFIWSTRRSA…TGPRELTEHE (155 aa). Residues 856–867 are compositionally biased toward basic residues; that stretch reads RKTSRSRRRRRP. Disordered stretches follow at residues 856 to 875, 890 to 925, and 942 to 979; these read RKTS…RALL, LYSA…APTP, and RASG…TEHE. Residues 894-903 are compositionally biased toward gly residues; that stretch reads GAGGDAGAHG. Over residues 912–923 the composition is skewed to pro residues; that stretch reads PGPPGGPRPQAP.

It belongs to the glutamate-gated ion channel (TC 1.A.10.1) family. GRIK5 subfamily. Homotetramer. Heterotetramer with GRIK2. Can form functional heteromeric receptors with GRIK1, GRIK2 and GRIK3. Forms a heteromeric complex with GRIK2. As to expression, expressed in the hippocampal mossy fiber synapses (at protein level).

It localises to the cell membrane. The protein localises to the postsynaptic cell membrane. Its subcellular location is the presynaptic cell membrane. Ionotropic glutamate receptor that functions as a cation-permeable ligand-gated ion channel, gated by L-glutamate and the glutamatergic agonist kainic acid. Cannot form functional channels on its own and produces channel activity only in heteromeric assembly with GRIK2 subunit. Can form functional heteromeric receptors with GRIK1 and GRIK3. This chain is Glutamate receptor ionotropic, kainate 5 (Grik5), found in Mus musculus (Mouse).